We begin with the raw amino-acid sequence, 715 residues long: Fatty acid oxidation complex subunit alpha (715 aa).

Residues 1–190 are enoyl-CoA hydratase; that stretch reads MTTTSAFMLN…KAGLVDDVVP (190 aa). The tract at residues 306–714 is 3-hydroxyacyl-CoA dehydrogenase; it reads GPLNSVGILG…FWTNGETDQG (409 aa).

In the N-terminal section; belongs to the enoyl-CoA hydratase/isomerase family. This sequence in the central section; belongs to the 3-hydroxyacyl-CoA dehydrogenase family. Heterotetramer of two alpha chains (FadJ) and two beta chains (FadI).

Its subcellular location is the cytoplasm. The catalysed reaction is a (3S)-3-hydroxyacyl-CoA = a (2E)-enoyl-CoA + H2O. It catalyses the reaction a 4-saturated-(3S)-3-hydroxyacyl-CoA = a (3E)-enoyl-CoA + H2O. It carries out the reaction a (3S)-3-hydroxyacyl-CoA + NAD(+) = a 3-oxoacyl-CoA + NADH + H(+). The enzyme catalyses (3S)-3-hydroxybutanoyl-CoA = (3R)-3-hydroxybutanoyl-CoA. Its pathway is lipid metabolism; fatty acid beta-oxidation. In terms of biological role, catalyzes the formation of a hydroxyacyl-CoA by addition of water on enoyl-CoA. Also exhibits 3-hydroxyacyl-CoA epimerase and 3-hydroxyacyl-CoA dehydrogenase activities. This is Fatty acid oxidation complex subunit alpha from Salmonella typhimurium (strain LT2 / SGSC1412 / ATCC 700720).